The primary structure comprises 400 residues: Chalcone synthase C2 (400 aa).

The active site involves Cys-168.

It belongs to the thiolase-like superfamily. Chalcone/stilbene synthases family.

The catalysed reaction is (E)-4-coumaroyl-CoA + 3 malonyl-CoA + 3 H(+) = 2',4,4',6'-tetrahydroxychalcone + 3 CO2 + 4 CoA. Its pathway is secondary metabolite biosynthesis; flavonoid biosynthesis. Its function is as follows. The primary product of this enzyme is 4,2',4',6'-tetrahydroxychalcone (also termed naringenin-chalcone or chalcone) which can under specific conditions spontaneously isomerize into naringenin. The protein is Chalcone synthase C2 (C2) of Zea mays (Maize).